The primary structure comprises 192 residues: Transcriptional activator GvpE (192 aa).

140-145 (KRKVYR) contacts DNA. The interval 150–181 (EATFDTVEPAVNRLVTFSLVLKALMIDCNARY) is leucine-zipper.

In terms of assembly, interacts with GvpD, also with c-GvpD from H.salinarum.

It localises to the cytoplasm. With respect to regulation, the amount of protein that accumulates is controlled by GvpD; GvpD causes a reduction in the amount of GvpE, preventing accumulation of excessive amounts of gas vesicles. Functionally, plays a regulatory role in gas vesicle synthesis, activates transcription of the gvpA operon, and probably of the gvpD operon. Gas vesicles are hollow, gas filled proteinaceous nanostructures found in some microorganisms. They allow positioning of halobacteria at the optimal depth for growth in the poorly aerated, shallow brine pools of their habitat. In terms of biological role, expression of a 9.5 kb mc-vac DNA fragment containing 2 divergently transcribed regions (gvpD-gvpE-gvpF-gvpG-gvpH-gvpI-gvpJ-gvpK-gvpL-gvpM and gvpA-gvpC-gvpN-gvpO) allows H.volcanii to produce gas vesicles. In Haloferax mediterranei (strain ATCC 33500 / DSM 1411 / JCM 8866 / NBRC 14739 / NCIMB 2177 / R-4) (Halobacterium mediterranei), this protein is Transcriptional activator GvpE.